Consider the following 488-residue polypeptide: Glutamyl-tRNA(Gln) amidotransferase subunit A (488 aa).

Active-site charge relay system residues include Lys77 and Ser152. Ser176 (acyl-ester intermediate) is an active-site residue.

Belongs to the amidase family. GatA subfamily. As to quaternary structure, heterotrimer of A, B and C subunits.

It carries out the reaction L-glutamyl-tRNA(Gln) + L-glutamine + ATP + H2O = L-glutaminyl-tRNA(Gln) + L-glutamate + ADP + phosphate + H(+). Allows the formation of correctly charged Gln-tRNA(Gln) through the transamidation of misacylated Glu-tRNA(Gln) in organisms which lack glutaminyl-tRNA synthetase. The reaction takes place in the presence of glutamine and ATP through an activated gamma-phospho-Glu-tRNA(Gln). The protein is Glutamyl-tRNA(Gln) amidotransferase subunit A of Streptococcus pneumoniae (strain Hungary19A-6).